We begin with the raw amino-acid sequence, 487 residues long: N-succinylglutamate 5-semialdehyde dehydrogenase (487 aa).

221-226 (GSSDTG) contacts NAD(+). Residues E244 and C278 contribute to the active site.

The protein belongs to the aldehyde dehydrogenase family. AstD subfamily.

It carries out the reaction N-succinyl-L-glutamate 5-semialdehyde + NAD(+) + H2O = N-succinyl-L-glutamate + NADH + 2 H(+). It functions in the pathway amino-acid degradation; L-arginine degradation via AST pathway; L-glutamate and succinate from L-arginine: step 4/5. Its function is as follows. Catalyzes the NAD-dependent reduction of succinylglutamate semialdehyde into succinylglutamate. In Burkholderia pseudomallei (strain 1106a), this protein is N-succinylglutamate 5-semialdehyde dehydrogenase.